A 393-amino-acid chain; its full sequence is Putative zinc metalloprotease Rip3 (393 aa).

Transmembrane regions (helical) follow at residues 10 to 30 (IAGF…LFTW) and 45 to 65 (AVVY…SLLA). Residue histidine 66 coordinates Zn(2+). Glutamate 67 is a catalytic residue. Residue histidine 70 coordinates Zn(2+). A run of 4 helical transmembrane segments spans residues 77–97 (AGVS…ALGG), 108–128 (IAFA…ALAI), 136–156 (PAIV…LGLF), and 207–227 (FVAG…FIFA). 2 consecutive CBS domains span residues 251–308 (MTAQ…RRST) and 315–376 (ALPL…AQPE).

This sequence belongs to the peptidase M50B family. Zn(2+) serves as cofactor.

It localises to the cell membrane. The chain is Putative zinc metalloprotease Rip3 (rip3) from Mycobacterium tuberculosis (strain ATCC 35801 / TMC 107 / Erdman).